The primary structure comprises 260 residues: Global transcriptional regulator CodY (260 aa).

Positions 1-159 (MPNLLEKTRK…SSTVVGIQLL (159 aa)) are GAF domain. Residues 207–226 (ASVIADRIGITRSVIVNALR) constitute a DNA-binding region (H-T-H motif).

The protein belongs to the CodY family.

The protein resides in the cytoplasm. DNA-binding global transcriptional regulator which is involved in the adaptive response to starvation and acts by directly or indirectly controlling the expression of numerous genes in response to nutrient availability. During rapid exponential growth, CodY is highly active and represses genes whose products allow adaptation to nutrient depletion. The chain is Global transcriptional regulator CodY from Streptococcus pyogenes serotype M1.